We begin with the raw amino-acid sequence, 277 residues long: Putative endonuclease (277 aa).

Putative endonuclease. This is Putative endonuclease from Escherichia coli (Enterobacteria phage T5).